Reading from the N-terminus, the 137-residue chain is BolA-like protein 1 (137 aa).

Phosphoserine is present on Ser81. The tract at residues 114 to 137 is disordered; sequence WRENSQLDTSPPCLGGNKKTLGTP.

The protein belongs to the BolA/IbaG family. Interacts with GLRX5. In terms of tissue distribution, widely expressed.

It localises to the mitochondrion. In terms of biological role, acts as a mitochondrial iron-sulfur (Fe-S) cluster assembly factor that facilitates (Fe-S) cluster insertion into a subset of mitochondrial proteins. Probably acts together with the monothiol glutaredoxin GLRX5. May protect cells against oxidative stress. The polypeptide is BolA-like protein 1 (Homo sapiens (Human)).